We begin with the raw amino-acid sequence, 136 residues long: Large ribosomal subunit protein uL22 (136 aa).

This sequence belongs to the universal ribosomal protein uL22 family. In terms of assembly, part of the 50S ribosomal subunit.

In terms of biological role, this protein binds specifically to 23S rRNA; its binding is stimulated by other ribosomal proteins, e.g. L4, L17, and L20. It is important during the early stages of 50S assembly. It makes multiple contacts with different domains of the 23S rRNA in the assembled 50S subunit and ribosome. The globular domain of the protein is located near the polypeptide exit tunnel on the outside of the subunit, while an extended beta-hairpin is found that lines the wall of the exit tunnel in the center of the 70S ribosome. This Bacteroides fragilis (strain ATCC 25285 / DSM 2151 / CCUG 4856 / JCM 11019 / LMG 10263 / NCTC 9343 / Onslow / VPI 2553 / EN-2) protein is Large ribosomal subunit protein uL22.